The primary structure comprises 333 residues: Ketol-acid reductoisomerase (NADP(+)) (333 aa).

One can recognise a KARI N-terminal Rossmann domain in the interval 2-182 (AELFYDADAD…GGTRAGVIKT (181 aa)). Residues 25–28 (YGSQ), Ser-51, Ser-53, and 83–86 (DPIQ) each bind NADP(+). His-108 is an active-site residue. Gly-134 contributes to the NADP(+) binding site. Residues 183–328 (TFTEETETDL…KELRKLMSWV (146 aa)) form the KARI C-terminal knotted domain. The Mg(2+) site is built by Asp-191, Glu-195, Glu-227, and Glu-231. Residue Ser-252 coordinates substrate.

This sequence belongs to the ketol-acid reductoisomerase family. Mg(2+) serves as cofactor.

It carries out the reaction (2R)-2,3-dihydroxy-3-methylbutanoate + NADP(+) = (2S)-2-acetolactate + NADPH + H(+). The enzyme catalyses (2R,3R)-2,3-dihydroxy-3-methylpentanoate + NADP(+) = (S)-2-ethyl-2-hydroxy-3-oxobutanoate + NADPH + H(+). It participates in amino-acid biosynthesis; L-isoleucine biosynthesis; L-isoleucine from 2-oxobutanoate: step 2/4. Its pathway is amino-acid biosynthesis; L-valine biosynthesis; L-valine from pyruvate: step 2/4. Functionally, involved in the biosynthesis of branched-chain amino acids (BCAA). Catalyzes an alkyl-migration followed by a ketol-acid reduction of (S)-2-acetolactate (S2AL) to yield (R)-2,3-dihydroxy-isovalerate. In the isomerase reaction, S2AL is rearranged via a Mg-dependent methyl migration to produce 3-hydroxy-3-methyl-2-ketobutyrate (HMKB). In the reductase reaction, this 2-ketoacid undergoes a metal-dependent reduction by NADPH to yield (R)-2,3-dihydroxy-isovalerate. The polypeptide is Ketol-acid reductoisomerase (NADP(+)) (Streptomyces avermitilis (strain ATCC 31267 / DSM 46492 / JCM 5070 / NBRC 14893 / NCIMB 12804 / NRRL 8165 / MA-4680)).